Consider the following 207-residue polypeptide: Zinc finger protein JAGGED-like (207 aa).

Positions 1–16 (MRADENNTLDLNNLPD) are enriched in low complexity. A disordered region spans residues 1–20 (MRADENNTLDLNNLPDDPSR). The C2H2-type zinc finger occupies 50–72 (YECRFCSLKFFKSQALGGHMNRH).

In terms of tissue distribution, expressed in the emerging leaf, stamen and carpel primordia. Not expressed in the apical shoot meristem (SAM).

It is found in the nucleus. Its function is as follows. Acts with JAG to promote growth and patterning in stamens and carpels. Promotes the growth of the abaxial and adaxial sides of floral organs. Promotes the growth of the pollen-bearing microsporangia in anthers, the carpel walls of the gynoecium and the establishment of the correct number of cell layers in carpel walls. Promotes leaf blade growth and trichome development. In Arabidopsis thaliana (Mouse-ear cress), this protein is Zinc finger protein JAGGED-like (JGL).